Reading from the N-terminus, the 307-residue chain is Myeloid-associated differentiation marker-like protein 2 (307 aa).

2 consecutive MARVEL domains span residues 17–154 and 159–303; these read AVTS…ARPG and YMAT…RIRF. Helical transmembrane passes span 53–73, 90–110, 129–149, 163–183, 198–218, 232–252, and 278–298; these read FCMA…ACEF, AFAM…PLYF, LAAS…VALT, VSGL…GALV, VAVY…SVMG, VVYT…WPVF, and LVVA…LAYS.

It belongs to the MAL family.

The protein localises to the membrane. This Rattus norvegicus (Rat) protein is Myeloid-associated differentiation marker-like protein 2 (Myadml2).